Consider the following 320-residue polypeptide: MPEARSSGPDLTRWRKQQQPVRRTVSQVCPPPRRPLTVADIRSGMENERLGVVRDSMFQNPLIVKAAGPASVGTSYSVYDSSAVQKVIPSLAGHHIKGGPQAELGKPRERSYSLPGINFNYGLYIRGLDGGVPEAIGRWNVFKQQPTCPHELTRNYIAMNRGAVKAGLVTARENLLYRQLNDIRISDQDDRRMKKEPPPLPPNMTFGIRARPSTPFFDLLQHRYLQLWVQEQKATQKAIKLEKKQKVVLGKLYETRSSQLRKYKPPVKLDTLWHMPHFQKVGRHLDTFPTEADRQRALKAHREECAVRQGTLRMGNYTHP.

A disordered region spans residues 1 to 27; the sequence is MPEARSSGPDLTRWRKQQQPVRRTVSQ. The segment covering 17–27 has biased composition (polar residues); sequence QQQPVRRTVSQ.

This sequence belongs to the CFAP77 family. In terms of assembly, microtubule inner protein component of sperm flagellar doublet microtubules. Expressed in airway epithelial cells.

Its subcellular location is the cytoplasm. It is found in the cytoskeleton. It localises to the cilium axoneme. The protein resides in the flagellum axoneme. Microtubule inner protein (MIP) part of the dynein-decorated doublet microtubules (DMTs) in cilia axoneme, which is required for motile cilia beating. The polypeptide is Cilia- and flagella-associated protein 77 (Homo sapiens (Human)).